The following is an 81-amino-acid chain: Antitoxin MT2731 (81 aa).

Its function is as follows. Antitoxin component of a type II toxin-antitoxin (TA) system. Neutralizes the effect of cognate toxin MT2730. This chain is Antitoxin MT2731, found in Mycobacterium tuberculosis (strain CDC 1551 / Oshkosh).